Here is an 84-residue protein sequence, read N- to C-terminus: U4-theraphotoxin-Hhn1a (84 aa).

Residues 1-22 form the signal peptide; sequence MKVTLIAILTCAAVLVLHTTAA. Positions 23–47 are excised as a propeptide; the sequence is EELEESQLMEVGMPDTELEAVDEER. Disulfide bonds link Cys-51/Cys-65, Cys-55/Cys-76, and Cys-70/Cys-81.

It belongs to the neurotoxin 12 (Hwtx-2) family. 02 (Hwtx-2) subfamily. As to expression, expressed by the venom gland.

Its subcellular location is the secreted. In terms of biological role, postsynaptic neurotoxin. This chain is U4-theraphotoxin-Hhn1a, found in Cyriopagopus hainanus (Chinese bird spider).